The following is a 491-amino-acid chain: Probable CtpA-like serine protease (491 aa).

The disordered stretch occupies residues 1 to 22 (MNDHQKNHATSQDDNTKSTPSK). Polar residues predominate over residues 8 to 22 (HATSQDDNTKSTPSK). A helical transmembrane segment spans residues 31 to 51 (LWHFILVILGIILLTSIITVV). The 83-residue stretch at 119-201 (TKQFNEGVSG…TYVTLTIKRG (83 aa)) folds into the PDZ domain. Catalysis depends on charge relay system residues Ser324, Asp335, and Lys349.

It belongs to the peptidase S41A family.

The protein resides in the cell membrane. The sequence is that of Probable CtpA-like serine protease from Staphylococcus epidermidis (strain ATCC 35984 / DSM 28319 / BCRC 17069 / CCUG 31568 / BM 3577 / RP62A).